The chain runs to 488 residues: Germacrene A hydroxylase (488 aa).

Over 1 to 6 the chain is Cytoplasmic; that stretch reads MELSIT. The chain crosses the membrane as a helical; Signal-anchor for type II membrane protein span at residues 7–23; that stretch reads TSIALATIVFFLYKLAT. At 24–488 the chain is on the lumenal side; that stretch reads RPKSTKKQLP…KTELLLVPSF (465 aa). N-linked (GlcNAc...) asparagine glycans are attached at residues Asn-169, Asn-260, and Asn-379. Cys-432 provides a ligand contact to heme.

The protein belongs to the cytochrome P450 family. It depends on heme as a cofactor.

The protein localises to the endoplasmic reticulum membrane. It carries out the reaction (+)-(R)-germacrene A + 3 reduced [NADPH--hemoprotein reductase] + 3 O2 = germacra-1(10),4,11(13)-trien-12-oate + 3 oxidized [NADPH--hemoprotein reductase] + 4 H2O + 4 H(+). Its pathway is secondary metabolite biosynthesis; terpenoid biosynthesis. Involved in the biosynthesis of germacrene-derived sesquiterpene lactones. Catalyzes three consecutive oxidations of germacrene A to produce germacrene A acid. Could also catalyze the three-step oxidation of non-natural substrate amorphadiene to artemisinic acid. The protein is Germacrene A hydroxylase of Lactuca sativa (Garden lettuce).